The primary structure comprises 445 residues: Protein EMP47 (445 aa).

The N-terminal stretch at 1–28 is a signal peptide; sequence MMMLITMKSTVLLSVFTVLATWAGLLEA. Topologically, residues 29 to 412 are lumenal; sequence HPLGDTSDAS…DGPQVDEIAR (384 aa). The 219-residue stretch at 36 to 254 folds into the L-type lectin-like domain; the sequence is DASKLSSDYS…EIFKMQFFNG (219 aa). C179 and C213 are disulfide-bonded. Residues 413–433 form a helical membrane-spanning segment; that stretch reads KLMIWLLPLIFIMLVMAYYTF. A mediates the interactions with COPI and COPII coat complexes region spans residues 430–433; sequence YYTF. Residues 434–445 lie on the Cytoplasmic side of the membrane; the sequence is RIRQEIIKTKLL. The Di-lysine motif signature appears at 441-445; sequence KTKLL.

Belongs to the EMP46/EMP47 family. Homooligomers. Interacts with EMP46 in the endoplasmic reticulum membrane. Interacts with the coatomer proteins COP1, SEC21 and SEC23.

Its subcellular location is the golgi apparatus membrane. It is found in the endoplasmic reticulum membrane. Functionally, involved in the secretion of glycoproteins and in nucleus architecture and gene silencing. Required for the endoplasmic reticulum exit of EMP46. The protein is Protein EMP47 (EMP47) of Saccharomyces cerevisiae (strain ATCC 204508 / S288c) (Baker's yeast).